The primary structure comprises 178 residues: MSRIGNKVIVIPAGVTVEVNGATVTVKGPKGELVRSFNENITLEIAENEITVKRPNDTKEMKMLHGTTRALLANMVEGVSNGFSKALEMIGVGYRAQLQGTKLVLSVGKSHQDEVEAPENIKFVVATPTSIVVEGISKEAVGQTAAYIRSRRSPEPYKGKGIRYVGEYVRRKEGKTGK.

The protein belongs to the universal ribosomal protein uL6 family. As to quaternary structure, part of the 50S ribosomal subunit.

Its function is as follows. This protein binds to the 23S rRNA, and is important in its secondary structure. It is located near the subunit interface in the base of the L7/L12 stalk, and near the tRNA binding site of the peptidyltransferase center. The chain is Large ribosomal subunit protein uL6 from Lactococcus lactis subsp. cremoris (strain SK11).